A 361-amino-acid polypeptide reads, in one-letter code: Riboflavin biosynthesis protein RibD (361 aa).

The region spanning 1-122 (MEEYYMKLAL…MMKEAGIEVR (122 aa)) is the CMP/dCMP-type deaminase domain. The tract at residues 1–144 (MEEYYMKLAL…EKFLHFMRTG (144 aa)) is deaminase. Position 49 (histidine 49) interacts with Zn(2+). Glutamate 51 functions as the Proton donor in the catalytic mechanism. The Zn(2+) site is built by cysteine 74 and cysteine 83. Residues 145 to 361 (LPYVTLKAAA…IKLTAKPTKE (217 aa)) form a reductase region. NADP(+) is bound at residue alanine 153. Serine 167 is a binding site for substrate. Tryptophan 169 is an NADP(+) binding site. Arginine 183 provides a ligand contact to substrate. NADP(+) is bound by residues threonine 195 and aspartate 199. Substrate contacts are provided by leucine 203 and arginine 206. An NADP(+)-binding site is contributed by threonine 221. Substrate is bound at residue glutamate 290. 292-298 (GSAVHGS) is a binding site for NADP(+).

This sequence in the N-terminal section; belongs to the cytidine and deoxycytidylate deaminase family. In the C-terminal section; belongs to the HTP reductase family. Homotetramer. Zn(2+) is required as a cofactor.

The catalysed reaction is 2,5-diamino-6-hydroxy-4-(5-phosphoribosylamino)-pyrimidine + H2O + H(+) = 5-amino-6-(5-phospho-D-ribosylamino)uracil + NH4(+). It carries out the reaction 5-amino-6-(5-phospho-D-ribitylamino)uracil + NADP(+) = 5-amino-6-(5-phospho-D-ribosylamino)uracil + NADPH + H(+). It functions in the pathway cofactor biosynthesis; riboflavin biosynthesis; 5-amino-6-(D-ribitylamino)uracil from GTP: step 2/4. The protein operates within cofactor biosynthesis; riboflavin biosynthesis; 5-amino-6-(D-ribitylamino)uracil from GTP: step 3/4. Converts 2,5-diamino-6-(ribosylamino)-4(3h)-pyrimidinone 5'-phosphate into 5-amino-6-(ribosylamino)-2,4(1h,3h)-pyrimidinedione 5'-phosphate. This is Riboflavin biosynthesis protein RibD (ribD) from Bacillus subtilis (strain 168).